The sequence spans 431 residues: Adenylosuccinate synthetase (431 aa).

Residues 12–18 and 40–42 contribute to the GTP site; these read GDEGKGK and GHT. The active-site Proton acceptor is the Asp13. Mg(2+) contacts are provided by Asp13 and Gly40. IMP is bound by residues 13 to 16, 38 to 41, Thr128, Arg142, Gln225, Thr240, and Arg304; these read DEGK and NAGH. His41 acts as the Proton donor in catalysis. 300-306 serves as a coordination point for substrate; the sequence is TTTGRPR. GTP-binding positions include Arg306, 332–334, and 414–416; these read KLD and GVG.

The protein belongs to the adenylosuccinate synthetase family. Homodimer. The cofactor is Mg(2+).

The protein localises to the cytoplasm. The catalysed reaction is IMP + L-aspartate + GTP = N(6)-(1,2-dicarboxyethyl)-AMP + GDP + phosphate + 2 H(+). It participates in purine metabolism; AMP biosynthesis via de novo pathway; AMP from IMP: step 1/2. In terms of biological role, plays an important role in the de novo pathway of purine nucleotide biosynthesis. Catalyzes the first committed step in the biosynthesis of AMP from IMP. The polypeptide is Adenylosuccinate synthetase (Thermomicrobium roseum (strain ATCC 27502 / DSM 5159 / P-2)).